Reading from the N-terminus, the 109-residue chain is MGGLIIEDLQEGFGKEAVKGKEITVHYTGWLENGTKFDSSLDRRQPLTITLGVGQVIKGWDEGFGGMKEGGKRKLTIPSEMGYGAHGAGGVIPPHATLIFEVELLKVYE.

In terms of domain architecture, PPIase FKBP-type spans 20–108 (GKEITVHYTG…IFEVELLKVY (89 aa)).

Belongs to the FKBP-type PPIase family.

It catalyses the reaction [protein]-peptidylproline (omega=180) = [protein]-peptidylproline (omega=0). With respect to regulation, inhibited by FK506. Its function is as follows. PPIases accelerate the folding of proteins. The polypeptide is FK506-binding protein (fbp) (Neisseria meningitidis serogroup B (strain ATCC BAA-335 / MC58)).